The sequence spans 215 residues: N-(5'-phosphoribosyl)anthranilate isomerase (215 aa).

This sequence belongs to the TrpF family.

The enzyme catalyses N-(5-phospho-beta-D-ribosyl)anthranilate = 1-(2-carboxyphenylamino)-1-deoxy-D-ribulose 5-phosphate. It functions in the pathway amino-acid biosynthesis; L-tryptophan biosynthesis; L-tryptophan from chorismate: step 3/5. The polypeptide is N-(5'-phosphoribosyl)anthranilate isomerase (Cellvibrio japonicus (strain Ueda107) (Pseudomonas fluorescens subsp. cellulosa)).